Consider the following 428-residue polypeptide: Enolase (428 aa).

Gln163 lines the (2R)-2-phosphoglycerate pocket. Glu205 (proton donor) is an active-site residue. Mg(2+)-binding residues include Asp242, Glu285, and Asp312. Residues Lys337, Arg366, Ser367, and Lys388 each contribute to the (2R)-2-phosphoglycerate site. Catalysis depends on Lys337, which acts as the Proton acceptor.

The protein belongs to the enolase family. The cofactor is Mg(2+).

The protein resides in the cytoplasm. It localises to the secreted. Its subcellular location is the cell surface. The catalysed reaction is (2R)-2-phosphoglycerate = phosphoenolpyruvate + H2O. The protein operates within carbohydrate degradation; glycolysis; pyruvate from D-glyceraldehyde 3-phosphate: step 4/5. Catalyzes the reversible conversion of 2-phosphoglycerate (2-PG) into phosphoenolpyruvate (PEP). It is essential for the degradation of carbohydrates via glycolysis. The sequence is that of Enolase from Persephonella marina (strain DSM 14350 / EX-H1).